The sequence spans 853 residues: MICAL-like protein 1 (853 aa).

Residues Ala2–Ala108 enclose the Calponin-homology (CH) domain. 2 disordered regions span residues Pro118–Ser162 and Ser224–Ile659. Residues Glu145–Ser162 are compositionally biased toward polar residues. Positions Ser162–Ser224 constitute an LIM zinc-binding domain. Phosphoserine occurs at positions 292 and 306. Residues Thr312 and Thr315 each carry the phosphothreonine modification. Basic and acidic residues predominate over residues Leu355 to Pro366. Positions Ala381 to Gly394 are enriched in pro residues. Position 388 is a phosphoserine (Ser388). An NPF1 motif is present at residues Asn419–Phe421. A compositionally biased stretch (pro residues) spans Pro429 to Ser445. Phosphothreonine is present on residues Thr457 and Thr459. Ser460, Ser461, Ser474, and Ser476 each carry phosphoserine. Low complexity-rich tracts occupy residues Pro495–Glu515 and Ser541–Ser553. A phosphoserine mark is found at Ser568 and Ser611. The span at Pro607–Ser618 shows a compositional bias: polar residues. An NPF2 motif is present at residues Asn623–Phe625. Positions Lys642–Ser853 are mediates the interaction with RAB13 and RAB35 and intramolecular interaction with the CH domain. The bMERB domain occupies Arg661–Ala808. Residues Glu671–Gly701 adopt a coiled-coil conformation. Residues His690 to Ser853 form a necessary and sufficient to associate with tubular recycling endosome membranes, mediate phosphatidic acid-binding and membrane tubulation region. A Phosphoserine modification is found at Ser730. A coiled-coil region spans residues Cys791–Glu820.

In terms of assembly, homooligomer. Interacts (via NPF1 motif) with EHD1 (via EH domain); the interaction is direct and probably recruits EHD1 to membranes. Interacts with EHD3 (via EH domain). Interacts with RAB35 (GTP-bound form); the interaction is direct and probably recruits MICALL1 to membranes. Interacts with ACAP2; the interaction is indirect through RAB35. Interacts with RAB8A (GTP-bound form); regulates RAB8A association with recycling endosomes. Interacts with RAB13 (GTP-bound form). Interacts with ARF6 (GTP-bound form). Interacts with PACSIN2 (via the SH3 domain). Interacts with DPYSL2.

It is found in the recycling endosome membrane. Its subcellular location is the late endosome membrane. The protein resides in the cell projection. It localises to the cilium membrane. The protein localises to the cytoplasm. It is found in the cytoskeleton. Its subcellular location is the microtubule organizing center. The protein resides in the centrosome. It localises to the centriole. In terms of biological role, lipid-binding protein with higher affinity for phosphatidic acid, a lipid enriched in recycling endosome membranes. On endosome membranes, acts as a downstream effector of Rab proteins recruiting cytosolic proteins to regulate membrane tubulation. Involved in a late step of receptor-mediated endocytosis regulating for instance endocytosed-EGF receptor trafficking. Alternatively, regulates slow endocytic recycling of endocytosed proteins back to the plasma membrane. Also involved in cargo protein delivery to the plasma membrane. Plays a role in ciliogenesis coordination, recruits EHD1 to primary cilium where it is anchored to the centriole through interaction with tubulins. May indirectly play a role in neurite outgrowth. The protein is MICAL-like protein 1 (MICALL1) of Bos taurus (Bovine).